The primary structure comprises 114 residues: UPF0342 protein SE_1526 (114 aa).

The protein belongs to the UPF0342 family.

This is UPF0342 protein SE_1526 from Staphylococcus epidermidis (strain ATCC 12228 / FDA PCI 1200).